The primary structure comprises 458 residues: uncharacterized protein (458 aa).

This is an uncharacterized protein from Bacillus subtilis (strain 168).